The chain runs to 91 residues: Essential MCU regulator, mitochondrial (91 aa).

Residues Val45–Ala65 traverse the membrane as a helical segment.

This sequence belongs to the SMDT1/EMRE family.

The protein localises to the mitochondrion inner membrane. In terms of biological role, essential regulatory subunit of the mitochondrial calcium uniporter (mcu) channel, a protein that mediates calcium uptake into mitochondria. The chain is Essential MCU regulator, mitochondrial from Aedes aegypti (Yellowfever mosquito).